The primary structure comprises 207 residues: Holliday junction branch migration complex subunit RuvA (207 aa).

Positions Met-1–Ser-64 are domain I. A domain II region spans residues Ser-65 to Ser-142. Residues Pro-143 to Ile-157 form a flexible linker region. The domain III stretch occupies residues Asn-158 to Ile-207.

Belongs to the RuvA family. Homotetramer. Forms an RuvA(8)-RuvB(12)-Holliday junction (HJ) complex. HJ DNA is sandwiched between 2 RuvA tetramers; dsDNA enters through RuvA and exits via RuvB. An RuvB hexamer assembles on each DNA strand where it exits the tetramer. Each RuvB hexamer is contacted by two RuvA subunits (via domain III) on 2 adjacent RuvB subunits; this complex drives branch migration. In the full resolvosome a probable DNA-RuvA(4)-RuvB(12)-RuvC(2) complex forms which resolves the HJ.

Its subcellular location is the cytoplasm. Its function is as follows. The RuvA-RuvB-RuvC complex processes Holliday junction (HJ) DNA during genetic recombination and DNA repair, while the RuvA-RuvB complex plays an important role in the rescue of blocked DNA replication forks via replication fork reversal (RFR). RuvA specifically binds to HJ cruciform DNA, conferring on it an open structure. The RuvB hexamer acts as an ATP-dependent pump, pulling dsDNA into and through the RuvAB complex. HJ branch migration allows RuvC to scan DNA until it finds its consensus sequence, where it cleaves and resolves the cruciform DNA. In Saccharophagus degradans (strain 2-40 / ATCC 43961 / DSM 17024), this protein is Holliday junction branch migration complex subunit RuvA.